The primary structure comprises 745 residues: Elongation factor G, mitochondrial (745 aa).

In terms of domain architecture, tr-type G spans 40-317; the sequence is ERIRNIGISA…AVLDYLPNPG (278 aa). GTP-binding positions include 49–56, 116–120, and 170–173; these read AHIDSGKT, DTPGH, and NKLD.

Belongs to the TRAFAC class translation factor GTPase superfamily. Classic translation factor GTPase family. EF-G/EF-2 subfamily.

It is found in the mitochondrion. The protein operates within protein biosynthesis; polypeptide chain elongation. Functionally, mitochondrial GTPase that catalyzes the GTP-dependent ribosomal translocation step during translation elongation. During this step, the ribosome changes from the pre-translocational (PRE) to the post-translocational (POST) state as the newly formed A-site-bound peptidyl-tRNA and P-site-bound deacylated tRNA move to the P and E sites, respectively. Catalyzes the coordinated movement of the two tRNA molecules, the mRNA and conformational changes in the ribosome. Essential during development as it acts as a retrograde signal from mitochondria to the nucleus to slow down cell proliferation if mitochondrial energy output is low. In Drosophila yakuba (Fruit fly), this protein is Elongation factor G, mitochondrial.